A 387-amino-acid polypeptide reads, in one-letter code: Protein disulfide isomerase pTAC5, chloroplastic (387 aa).

Residues methionine 1–valine 40 constitute a chloroplast transit peptide. Coiled coils occupy residues glutamate 72–serine 106 and arginine 143–lysine 163. A CR-type zinc finger spans residues proline 318 to leucine 387.

As to quaternary structure, interacts with HSP21; the formed complex associates with the plastid-encoded RNA polymerase (PEP) complex not only during transcription initiation, but also during elongation and termination, and with a stronger efficiency in illuminated chloroplasts. Binds to promoter regions of PEP-dependent genes, especially after a heat stress. Interacts with FLN2.

It is found in the plastid. It localises to the chloroplast stroma. The protein resides in the chloroplast nucleoid. It carries out the reaction Catalyzes the rearrangement of -S-S- bonds in proteins.. Functionally, exhibits zinc-dependent disulfide isomerase activity. Required for seedling and chloroplast development under heat stress, probably by maintaining plastid-encoded RNA polymerase (PEP)-dependent transcription. This chain is Protein disulfide isomerase pTAC5, chloroplastic, found in Arabidopsis thaliana (Mouse-ear cress).